We begin with the raw amino-acid sequence, 704 residues long: Eukaryotic translation initiation factor 2-alpha kinase 1 (704 aa).

Residues 224-667 form the Protein kinase domain; the sequence is FEELELLGKG…LTSNLFHDLV (444 aa). ATP contacts are provided by residues 230–238 and Lys253; that span reads LGKGGYGSV. The active-site Proton acceptor is Asp491.

Belongs to the protein kinase superfamily. Ser/Thr protein kinase family. GCN2 subfamily. Autophosphorylated.

The catalysed reaction is L-seryl-[protein] + ATP = O-phospho-L-seryl-[protein] + ADP + H(+). It catalyses the reaction L-threonyl-[protein] + ATP = O-phospho-L-threonyl-[protein] + ADP + H(+). Mediates down-regulation of protein synthesis in response to stress conditions by the phosphorylation of the alpha subunit of eIF-2 (tif211) on 'Ser-52'. Protein synthesis is inhibited at the level of initiation. Activity is inhibited in the presence of heme. The chain is Eukaryotic translation initiation factor 2-alpha kinase 1 (hri1) from Schizosaccharomyces pombe (strain 972 / ATCC 24843) (Fission yeast).